We begin with the raw amino-acid sequence, 283 residues long: Nucleoid occlusion protein (283 aa).

The segment at residues 142-161 (ESLAQRLGKGQSTIANKLRL) is a DNA-binding region (H-T-H motif).

Belongs to the ParB family.

The protein resides in the cytoplasm. It is found in the nucleoid. Functionally, effects nucleoid occlusion by binding relatively nonspecifically to DNA and preventing the assembly of the division machinery in the vicinity of the nucleoid, especially under conditions that disturb the cell cycle. It helps to coordinate cell division and chromosome segregation by preventing the formation of the Z ring through the nucleoid, which would cause chromosome breakage. The protein is Nucleoid occlusion protein of Shouchella clausii (strain KSM-K16) (Alkalihalobacillus clausii).